Consider the following 229-residue polypeptide: 2-C-methyl-D-erythritol 4-phosphate cytidylyltransferase (229 aa).

It belongs to the IspD/TarI cytidylyltransferase family. IspD subfamily.

It carries out the reaction 2-C-methyl-D-erythritol 4-phosphate + CTP + H(+) = 4-CDP-2-C-methyl-D-erythritol + diphosphate. The protein operates within isoprenoid biosynthesis; isopentenyl diphosphate biosynthesis via DXP pathway; isopentenyl diphosphate from 1-deoxy-D-xylulose 5-phosphate: step 2/6. Functionally, catalyzes the formation of 4-diphosphocytidyl-2-C-methyl-D-erythritol from CTP and 2-C-methyl-D-erythritol 4-phosphate (MEP). This is 2-C-methyl-D-erythritol 4-phosphate cytidylyltransferase from Clostridium botulinum (strain ATCC 19397 / Type A).